The chain runs to 527 residues: Inositolphosphotransferase 1 (527 aa).

Residues 1 to 24 (MNVIFSLASFVKNMYNASLNQRNL) are Cytoplasmic-facing. Residues 25 to 45 (ISLPFNFMLNFAPVFIWLSIF) traverse the membrane as a helical segment. Residues 46-99 (KRAGLIPIRLRPDIHSKFAFFADQFLFGDYWHELTVQLPDNTSKLFFWSFISSS) lie on the Lumenal side of the membrane. The helical transmembrane segment at 100–120 (AFLLVFLICIPFAIWYYIYYI) threads the bilayer. At 121-152 (KHVNYNLLEWFANIFHYPCKRKQRPIQKRFRT) the chain is on the cytoplasmic side. A helical transmembrane segment spans residues 153–173 (IFIPFALPLFTFVILNIDHFF). Topologically, residues 174-190 (AYQSDANFTKTKDLLAW) are lumenal. Residues 191-211 (FSYVILHLTAPILTAVYLYVF) traverse the membrane as a helical segment. At 212–219 (QPPGTLKC) the chain is on the cytoplasmic side. A helical transmembrane segment spans residues 220–240 (FSFALGLQNIAGVLTHLLVPM). At 241 to 288 (ASPWFTHLYGIDDTEHVNYTQEGFAAGLIRVDSHLGTHLNTKGFHMSP) the chain is on the lumenal side. The helical transmembrane segment at 289–309 (IVFGAVPSLHSAIAFQCFLFL) threads the bilayer. At 310–435 (VSRSTSLKHR…KWIFKIVNDG (126 aa)) the chain is on the cytoplasmic side. The tract at residues 331–404 (NDSSTFKLSE…GGGDGSIINS (74 aa)) is disordered. Residues 376-389 (ERSSSPSSSFTVSS) show a composition bias toward low complexity. Residues 436–456 (FIPKFWAILYIILQWWATMYL) traverse the membrane as a helical segment. Topologically, residues 457–461 (DHHYR) are lumenal. A helical membrane pass occupies residues 462 to 482 (FDLFVGVLYAMTSFIIINWFV). The Cytoplasmic portion of the chain corresponds to 483-527 (LQPKVLKKWIHIRLGDKVDTRNEARTFGMRVFCGTKMEWFFDPLA).

The protein resides in the golgi apparatus membrane. It carries out the reaction an alpha-D-mannosyl-(1&lt;-&gt;6)-1D-myo-inositol-1-phospho-N-[(R)-2-hydroxy-very-long-chain fatty acyl]-(R)-4-hydroxysphingoid base + a 1,2-diacyl-sn-glycero-3-phospho-(1D-myo-inositol) = an alpha-D-mannosyl-6-(1D-myo-inositol phospho)-(1&lt;-&gt;6)-1D-myo-inositol-1-phospho-N-[(R)-2-hydroxy-very-long-chain fatty acyl]-(R)-4-hydroxysphingoid base + a 1,2-diacyl-sn-glycerol. The enzyme catalyses a mannosylinositol-1-phospho-N-acyl-sphingoid base + a 1,2-diacyl-sn-glycero-3-phospho-(1D-myo-inositol) = an inositol phosphomannosylnositol-1-phospho-N-acylsphingoid base + a 1,2-diacyl-sn-glycerol. It catalyses the reaction a mannosylinositol-1-phospho-N-(2-hydroxyacyl)-4R-hydroxysphingoid base + a 1,2-diacyl-sn-glycero-3-phospho-(1D-myo-inositol) = an inositol phosphomannosylnositol-1-phospho-N-(2-hydroxyacyl)-4R-hydroxysphingoid base + a 1,2-diacyl-sn-glycerol. Catalyzes the addition of a phosphorylinositol group onto mannosyl phosphorylinositol ceramide (MIPC) to form mannosyl diphosphorylinositol ceramide (M(IP)2C), the major sphingolipid in membranes of S.cerevisiae. This Saccharomyces cerevisiae (strain ATCC 204508 / S288c) (Baker's yeast) protein is Inositolphosphotransferase 1.